Consider the following 2070-residue polypeptide: HEAT repeat-containing protein 5B (2070 aa).

HEAT repeat units lie at residues 848–885 (EVRKSALTLVMGALDNPNPILRCAAGEALGRMAQVVGE), 1062–1099 (VNLSSLVPSLCVHLCSSHLLLRRAAVACLRQLAQREAA), and 1290–1327 (LHLSDLIRMAFMAATDHSNQLRMAGLQALEDIIKKFAS). Ser1737 bears the Phosphoserine mark.

The protein belongs to the HEATR5 family. Self-associates. Component of the aftiphilin/p200/gamma-synergin complex, at least composed of AFTPH/aftiphilin, HEATR5B/p200a and SYNRG/gamma-synergin, which plays a role in the AP1G1/AP-1-mediated protein trafficking from early to recycling endosomes and between the trans-Golgi network (TGN) and endosomes. Within the complex interacts with AFTPH/aftiphilin and SYNRG/gamma-synergin; the interactions are direct. Interacts with GGA1.

The protein resides in the cytoplasm. Its subcellular location is the perinuclear region. It is found in the cytoplasmic vesicle. It localises to the clathrin-coated vesicle. Functionally, component of clathrin-coated vesicles. Component of the aftiphilin/p200/gamma-synergin complex, which plays roles in AP1G1/AP-1-mediated protein trafficking including the trafficking of transferrin from early to recycling endosomes, and the membrane trafficking of furin and the lysosomal enzyme cathepsin D between the trans-Golgi network (TGN) and endosomes. This is HEAT repeat-containing protein 5B (Heatr5b) from Mus musculus (Mouse).